Consider the following 196-residue polypeptide: Probable malonic semialdehyde reductase RutE (196 aa).

Belongs to the nitroreductase family. HadB/RutE subfamily. The cofactor is FMN.

It catalyses the reaction 3-hydroxypropanoate + NADP(+) = 3-oxopropanoate + NADPH + H(+). Functionally, may reduce toxic product malonic semialdehyde to 3-hydroxypropionic acid, which is excreted. The sequence is that of Probable malonic semialdehyde reductase RutE from Escherichia coli (strain SMS-3-5 / SECEC).